The sequence spans 470 residues: Sugar transporter ESL1 (470 aa).

Residues 10 to 16 (LEAGLLL) carry the Essential for the localization to the vacuole membrane motif. 12 consecutive transmembrane segments (helical) span residues 28 to 48 (ITAV…CFGC), 68 to 88 (VAQY…GAIF), 99 to 119 (KGTM…VALA), 130 to 150 (LSTG…IAEI), 157 to 177 (GAFV…FYVI), 186 to 206 (LALI…FIPE), 268 to 288 (VVIG…GLMY), 303 to 323 (IGSM…LILV), 332 to 352 (LLAS…SFCF), 368 to 388 (IGVV…PWII), 404 to 424 (LVTL…NFML), and 430 to 450 (GTFL…YAMV).

This sequence belongs to the major facilitator superfamily. Sugar transporter (TC 2.A.1.1) family. In terms of tissue distribution, expressed in both shoots and roots. In roots, strongly expressed in pericycle and xylem parenchyma cells, and to a lesser extent in the root endodermis. In flowers, expressed in sepals.

The protein localises to the vacuole membrane. It is found in the vesicle. Sugar transporter. Transports monosaccharides across the vacuolar membrane independently from a proton gradient. May function coordinately with the vacuolar invertase to regulate osmotic pressure by affecting the accumulation of sugar in the cells under abiotic stress conditions. In Arabidopsis thaliana (Mouse-ear cress), this protein is Sugar transporter ESL1.